Reading from the N-terminus, the 327-residue chain is Thiosulfate dehydrogenase (327 aa).

The first 26 residues, methionine 1–glycine 26, serve as a signal peptide directing secretion. The span at asparagine 66–alanine 78 shows a compositional bias: low complexity. A disordered region spans residues asparagine 66 to proline 93. Cytochrome c domains lie at alanine 99 to serine 196 and proline 219 to proline 305. Positions 125, 128, 129, 232, 235, and 236 each coordinate heme c.

Monomer. In terms of processing, binds 2 heme c groups covalently per subunit.

It localises to the periplasm. It catalyses the reaction 2 thiosulfate + 2 Fe(III)-[cytochrome c] = tetrathionate + 2 Fe(II)-[cytochrome c] + 2 H(+). Functionally, catalyzes the oxidation of 2 molecules of thiosulfate to tetrathionate. The sequence is that of Thiosulfate dehydrogenase (tsdA) from Psychrobacter arcticus (strain DSM 17307 / VKM B-2377 / 273-4).